A 250-amino-acid chain; its full sequence is Orotidine 5'-phosphate decarboxylase (250 aa).

Substrate is bound by residues Asp9, Lys40, 67–76 (DLKFHDIPNT), Thr132, Arg190, Gln204, Gly224, and Arg225. The active-site Proton donor is the Lys69.

This sequence belongs to the OMP decarboxylase family. Type 1 subfamily. As to quaternary structure, homodimer.

The enzyme catalyses orotidine 5'-phosphate + H(+) = UMP + CO2. The protein operates within pyrimidine metabolism; UMP biosynthesis via de novo pathway; UMP from orotate: step 2/2. Its function is as follows. Catalyzes the decarboxylation of orotidine 5'-monophosphate (OMP) to uridine 5'-monophosphate (UMP). The chain is Orotidine 5'-phosphate decarboxylase from Nitratidesulfovibrio vulgaris (strain DSM 19637 / Miyazaki F) (Desulfovibrio vulgaris).